A 580-amino-acid chain; its full sequence is Conglutin beta 3 (580 aa).

An N-terminal signal peptide occupies residues 1-30 (MAKMRVRFPTLVLLLGIVFLMAVSIGIAYG). Composition is skewed to basic and acidic residues over residues 37–72 (NHER…RESE) and 79–92 (REQR…REQE). The disordered stretch occupies residues 37 to 165 (NHERPQEREQ…DSRRQRNPYY (129 aa)). Low complexity predominate over residues 124–133 (QGSSSSSRRQ). Positions 134–145 (SGYERREQREER) are enriched in basic and acidic residues. Cupin type-1 domains lie at 164-322 (YYFS…EEIQ) and 381-538 (FNLR…EDVE). Residues Asn229 and Asn488 are each glycosylated (N-linked (GlcNAc...) asparagine). Positions 549–569 (FANAQPQQQQQREREGRHGRR) are disordered.

The protein belongs to the 7S seed storage protein family. Component of globulins complexes which accumulate in seeds.

Functionally, seed storage protein. Accumulates during seed development and is hydrolyzed after germination to provide a carbon and nitrogen source for the developing seedling. The protein is Conglutin beta 3 of Lupinus angustifolius (Narrow-leaved blue lupine).